We begin with the raw amino-acid sequence, 395 residues long: Elongation factor Tu (395 aa).

The 196-residue stretch at 10 to 205 folds into the tr-type G domain; the sequence is KPHVNIGTIG…VDSYIPLPPR (196 aa). Residues 19–26 are G1; sequence GHVDHGKT. 19-26 provides a ligand contact to GTP; it reads GHVDHGKT. Mg(2+) is bound at residue Thr26. The G2 stretch occupies residues 60–64; sequence GITIN. Residues 81–84 are G3; the sequence is DCPG. Residues 81-85 and 136-139 contribute to the GTP site; these read DCPGH and NKVD. Positions 136-139 are G4; that stretch reads NKVD. The interval 174-176 is G5; the sequence is SAT.

The protein belongs to the TRAFAC class translation factor GTPase superfamily. Classic translation factor GTPase family. EF-Tu/EF-1A subfamily. As to quaternary structure, monomer.

Its subcellular location is the cytoplasm. The catalysed reaction is GTP + H2O = GDP + phosphate + H(+). Its function is as follows. GTP hydrolase that promotes the GTP-dependent binding of aminoacyl-tRNA to the A-site of ribosomes during protein biosynthesis. This is Elongation factor Tu from Terrimonas ferruginea (Flavobacterium ferrugineum).